An 86-amino-acid chain; its full sequence is UPF0291 protein LBA1279 (86 aa).

Composition is skewed to basic and acidic residues over residues 1 to 27 and 65 to 75; these read MNKD…KENE and NGKEVTSEKAK. Disordered regions lie at residues 1–36 and 65–86; these read MNKD…EEEE and NGKE…LRKD. Positions 76-86 are enriched in basic residues; it reads QAQRKKGLRKD.

Belongs to the UPF0291 family.

It localises to the cytoplasm. The chain is UPF0291 protein LBA1279 from Lactobacillus acidophilus (strain ATCC 700396 / NCK56 / N2 / NCFM).